Reading from the N-terminus, the 249-residue chain is Flagellar brake protein YcgR (249 aa).

Residues 117-236 (QRREFFRVDA…ERELQQVIFS (120 aa)) form the PilZ domain.

It belongs to the YcgR family. As to quaternary structure, monomer. Interacts with the flagellar basal bodies.

The protein localises to the bacterial flagellum basal body. In terms of biological role, acts as a flagellar brake, regulating swimming and swarming in a bis-(3'-5') cyclic diguanylic acid (c-di-GMP)-dependent manner. Binds 1 c-di-GMP dimer per subunit. Increasing levels of c-di-GMP lead to decreased motility. The polypeptide is Flagellar brake protein YcgR (Erwinia tasmaniensis (strain DSM 17950 / CFBP 7177 / CIP 109463 / NCPPB 4357 / Et1/99)).